The following is an 87-amino-acid chain: MSSRRSSRSSVSEEEINELISKLQSLLPSSRRRGANQASTTKLLKETCSYIKSLHREVDDLSDRLSDLMAGMDHNSPGAEIIRSLLR.

The 54-residue stretch at 1–54 (MSSRRSSRSSVSEEEINELISKLQSLLPSSRRRGANQASTTKLLKETCSYIKSL) folds into the bHLH domain.

The protein belongs to the bHLH protein family. In terms of assembly, interacts with LO9-177. As to expression, expressed in phloem of leaf blades and sheaths, lamina joints, filaments before anthesis, vasculare bundles of the ovule, lemma and palea, and embryos.

The protein localises to the cytoplasm. Functionally, atypical and probable non DNA-binding bHLH transcription factor that acts as a positive regulator of brassinosteroid (BR) response. Controls lamina inclination by participating in two BR signaling pathways involving BRI1 and RGA1. Involved in the RLI1-dependent modulation of leaf inclination by promoting lamina joint cell elongation, especially in response to phosphate (Pi) availability. The sequence is that of Transcription factor ILI4 (ILI4) from Oryza sativa subsp. japonica (Rice).